A 431-amino-acid polypeptide reads, in one-letter code: Glutamate--tRNA ligase 1 (431 aa).

The short motif at 6–16 (PSPTGDMHIGN) is the 'HIGH' region element. The 'KMSKS' region signature appears at 235–239 (KMSKR). Residue Lys-238 coordinates ATP.

It belongs to the class-I aminoacyl-tRNA synthetase family. Glutamate--tRNA ligase type 1 subfamily. As to quaternary structure, monomer.

It is found in the cytoplasm. The catalysed reaction is tRNA(Glu) + L-glutamate + ATP = L-glutamyl-tRNA(Glu) + AMP + diphosphate. Catalyzes the attachment of glutamate to tRNA(Glu) in a two-step reaction: glutamate is first activated by ATP to form Glu-AMP and then transferred to the acceptor end of tRNA(Glu). The protein is Glutamate--tRNA ligase 1 of Campylobacter curvus (strain 525.92).